A 446-amino-acid polypeptide reads, in one-letter code: Tubulin beta chain (446 aa).

The GTP site is built by glutamine 11, glutamate 69, serine 138, glycine 142, threonine 143, glycine 144, asparagine 204, and asparagine 226. Glutamate 69 provides a ligand contact to Mg(2+). The interval 425–446 (YQEASISEGEEEYPEEVSNEEE) is disordered. Residues 432–446 (EGEEEYPEEVSNEEE) are compositionally biased toward acidic residues.

Belongs to the tubulin family. As to quaternary structure, dimer of alpha and beta chains. A typical microtubule is a hollow water-filled tube with an outer diameter of 25 nm and an inner diameter of 15 nM. Alpha-beta heterodimers associate head-to-tail to form protofilaments running lengthwise along the microtubule wall with the beta-tubulin subunit facing the microtubule plus end conferring a structural polarity. Microtubules usually have 13 protofilaments but different protofilament numbers can be found in some organisms and specialized cells. It depends on Mg(2+) as a cofactor.

It localises to the cytoplasm. The protein localises to the cytoskeleton. In terms of biological role, tubulin is the major constituent of microtubules, a cylinder consisting of laterally associated linear protofilaments composed of alpha- and beta-tubulin heterodimers. Microtubules grow by the addition of GTP-tubulin dimers to the microtubule end, where a stabilizing cap forms. Below the cap, tubulin dimers are in GDP-bound state, owing to GTPase activity of alpha-tubulin. This is Tubulin beta chain (TUB2) from Blumeria hordei (Barley powdery mildew).